Consider the following 386-residue polypeptide: Uroporphyrinogen decarboxylase (386 aa).

The coproporphyrinogen I site is built by R44, A46, R48, R57, D93, Y170, S225, and H364. Coproporphyrinogen III is bound by residues R44, A46, and R48. The coproporphyrinogen III site is built by D93, Y170, S225, and H364.

This sequence belongs to the uroporphyrinogen decarboxylase family. As to quaternary structure, homodimer.

The protein localises to the cytoplasm. The protein resides in the cytosol. The enzyme catalyses uroporphyrinogen III + 4 H(+) = coproporphyrinogen III + 4 CO2. It participates in porphyrin-containing compound metabolism; protoporphyrin-IX biosynthesis; coproporphyrinogen-III from 5-aminolevulinate: step 4/4. Catalyzes the decarboxylation of four acetate groups of uroporphyrinogen-III to yield coproporphyrinogen-III. This Drosophila virilis (Fruit fly) protein is Uroporphyrinogen decarboxylase.